The chain runs to 245 residues: Endogenous retrovirus group K member 5 Env polyprotein (245 aa).

The truncated surface protein stretch occupies residues 1–245 (MVTPVTWMDN…TLEFGLEIKL (245 aa)).

This sequence belongs to the beta type-B retroviral envelope protein family. HERV class-II K(HML-2) env subfamily. As to expression, expressed in lung, placenta, testis, peripheral blood lymphocytes, and teratocarcinoma cell lines.

It is found in the virion. Retroviral envelope proteins mediate receptor recognition and membrane fusion during early infection. Endogenous envelope proteins may have kept, lost or modified their original function during evolution. The polypeptide is Endogenous retrovirus group K member 5 Env polyprotein (ERVK-5) (Homo sapiens (Human)).